The primary structure comprises 131 residues: Small ribosomal subunit protein uS8 (131 aa).

Belongs to the universal ribosomal protein uS8 family. In terms of assembly, part of the 30S ribosomal subunit. Contacts proteins S5 and S12.

Its function is as follows. One of the primary rRNA binding proteins, it binds directly to 16S rRNA central domain where it helps coordinate assembly of the platform of the 30S subunit. This is Small ribosomal subunit protein uS8 from Burkholderia lata (strain ATCC 17760 / DSM 23089 / LMG 22485 / NCIMB 9086 / R18194 / 383).